The following is a 176-amino-acid chain: 3-hydroxyanthranilate 3,4-dioxygenase (176 aa).

O2 is bound at residue Arg-44. Fe cation contacts are provided by His-48, Glu-54, and His-92. Substrate is bound at residue Glu-54. Substrate is bound by residues Arg-96 and Glu-106. Residues Cys-121, Cys-124, Cys-158, and Cys-161 each contribute to the Fe cation site.

Belongs to the 3-HAO family. As to quaternary structure, homodimer. Requires Fe(2+) as cofactor.

It carries out the reaction 3-hydroxyanthranilate + O2 = (2Z,4Z)-2-amino-3-carboxymuconate 6-semialdehyde. Its pathway is cofactor biosynthesis; NAD(+) biosynthesis; quinolinate from L-kynurenine: step 3/3. Catalyzes the oxidative ring opening of 3-hydroxyanthranilate to 2-amino-3-carboxymuconate semialdehyde, which spontaneously cyclizes to quinolinate. The protein is 3-hydroxyanthranilate 3,4-dioxygenase of Xanthomonas oryzae pv. oryzae (strain MAFF 311018).